The primary structure comprises 107 residues: SH3 domain-binding glutamic acid-rich-like protein 2 (107 aa).

The short motif at 61–67 is the SH3-binding element; sequence QGNPLPP.

It belongs to the SH3BGR family.

The protein resides in the nucleus. The protein is SH3 domain-binding glutamic acid-rich-like protein 2 (SH3BGRL2) of Pongo abelii (Sumatran orangutan).